A 215-amino-acid polypeptide reads, in one-letter code: Octanoyltransferase (215 aa).

The BPL/LPL catalytic domain maps to 42-215; the sequence is QNTPDEIWLL…AEKLKARLKQ (174 aa). Substrate-binding positions include 81 to 88, 148 to 150, and 161 to 163; these read RGGQITYH, ALG, and GLA. Cys179 (acyl-thioester intermediate) is an active-site residue.

Belongs to the LipB family.

It is found in the cytoplasm. It catalyses the reaction octanoyl-[ACP] + L-lysyl-[protein] = N(6)-octanoyl-L-lysyl-[protein] + holo-[ACP] + H(+). The protein operates within protein modification; protein lipoylation via endogenous pathway; protein N(6)-(lipoyl)lysine from octanoyl-[acyl-carrier-protein]: step 1/2. Its function is as follows. Catalyzes the transfer of endogenously produced octanoic acid from octanoyl-acyl-carrier-protein onto the lipoyl domains of lipoate-dependent enzymes. Lipoyl-ACP can also act as a substrate although octanoyl-ACP is likely to be the physiological substrate. The sequence is that of Octanoyltransferase from Nitrosospira multiformis (strain ATCC 25196 / NCIMB 11849 / C 71).